The chain runs to 330 residues: Peroxidase 55 (330 aa).

An N-terminal signal peptide occupies residues 1–30; sequence MDIRSDDAKKPMMMWFLGMLLFSMVAESNA. Intrachain disulfides connect Cys41–Cys121, Cys74–Cys79, Cys127–Cys326, and Cys206–Cys238. His72 (proton acceptor) is an active-site residue. Positions 73, 76, 78, 80, and 82 each coordinate Ca(2+). Pro169 provides a ligand contact to substrate. His199 contacts heme b. Thr200 serves as a coordination point for Ca(2+). The N-linked (GlcNAc...) asparagine glycan is linked to Asn215. Ca(2+) is bound by residues Asp250, Ser253, and Asp258.

It belongs to the peroxidase family. Classical plant (class III) peroxidase subfamily. It depends on heme b as a cofactor. The cofactor is Ca(2+). In terms of tissue distribution, slightly expressed in roots.

Its subcellular location is the secreted. The enzyme catalyses 2 a phenolic donor + H2O2 = 2 a phenolic radical donor + 2 H2O. Its function is as follows. Removal of H(2)O(2), oxidation of toxic reductants, biosynthesis and degradation of lignin, suberization, auxin catabolism, response to environmental stresses such as wounding, pathogen attack and oxidative stress. These functions might be dependent on each isozyme/isoform in each plant tissue. In Arabidopsis thaliana (Mouse-ear cress), this protein is Peroxidase 55 (PER55).